The following is a 160-amino-acid chain: Sec-independent protein translocase protein TatB (160 aa).

The chain crosses the membrane as a helical span at residues 1–21 (MFGMGFFEILVVLVVAIIFLG). Positions 118–160 (HLNEEVSNEEALNKEVSSDESPKEVQLATDNNTKEHDKEKEHV) are disordered. 2 stretches are compositionally biased toward basic and acidic residues: residues 128 to 140 (ALNKEVSSDESPK) and 149 to 160 (NTKEHDKEKEHV).

The protein belongs to the TatB family. As to quaternary structure, the Tat system comprises two distinct complexes: a TatABC complex, containing multiple copies of TatA, TatB and TatC subunits, and a separate TatA complex, containing only TatA subunits. Substrates initially bind to the TatABC complex, which probably triggers association of the separate TatA complex to form the active translocon.

It is found in the cell inner membrane. Its function is as follows. Part of the twin-arginine translocation (Tat) system that transports large folded proteins containing a characteristic twin-arginine motif in their signal peptide across membranes. Together with TatC, TatB is part of a receptor directly interacting with Tat signal peptides. TatB may form an oligomeric binding site that transiently accommodates folded Tat precursor proteins before their translocation. This Helicobacter pylori (strain HPAG1) protein is Sec-independent protein translocase protein TatB.